Consider the following 842-residue polypeptide: Oxysterol-binding protein-related protein 7 (842 aa).

Residues 1–28 (MDFQERDPPFLPESAQSSKPSSAQQASE) are disordered. Residues 14 to 27 (SAQSSKPSSAQQAS) show a composition bias toward low complexity. Residues 47 to 142 (PERQEGHLLK…WVAQLRAHRL (96 aa)) enclose the PH domain. Thr-171 carries the post-translational modification Phosphothreonine. Ser-217, Ser-226, Ser-256, and Ser-272 each carry phosphoserine. The disordered stretch occupies residues 330–369 (DMHQGSELSRMGVSEASTGQRRLHSLSTSSDTTADSFSSL). Residues 354 to 369 (SLSTSSDTTADSFSSL) show a composition bias toward low complexity.

The protein belongs to the OSBP family. As to expression, expressed in epithelium of small and large intestines (at protein level). Expressed in stomach, duodenum, jejunum, ascending colon, spleen, thymus, lymph node, trachea and leukocytes.

Its subcellular location is the cytoplasm. The protein localises to the cytosol. It localises to the endoplasmic reticulum membrane. The protein resides in the cell membrane. The polypeptide is Oxysterol-binding protein-related protein 7 (OSBPL7) (Homo sapiens (Human)).